The following is a 204-amino-acid chain: 3-dehydroquinate dehydratase (204 aa).

Residues Ser-9, Glu-30–Arg-32, and Arg-57 contribute to the 3-dehydroquinate site. Catalysis depends on His-108, which acts as the Proton donor/acceptor. The Schiff-base intermediate with substrate role is filled by Lys-133. Positions 167, 186, and 190 each coordinate 3-dehydroquinate.

It belongs to the type-I 3-dehydroquinase family. In terms of assembly, homodimer.

The catalysed reaction is 3-dehydroquinate = 3-dehydroshikimate + H2O. It functions in the pathway metabolic intermediate biosynthesis; chorismate biosynthesis; chorismate from D-erythrose 4-phosphate and phosphoenolpyruvate: step 3/7. Involved in the third step of the chorismate pathway, which leads to the biosynthesis of aromatic amino acids. Catalyzes the cis-dehydration of 3-dehydroquinate (DHQ) and introduces the first double bond of the aromatic ring to yield 3-dehydroshikimate. This is 3-dehydroquinate dehydratase from Metallosphaera sedula (strain ATCC 51363 / DSM 5348 / JCM 9185 / NBRC 15509 / TH2).